The chain runs to 78 residues: Protein SlyX homolog (78 aa).

Belongs to the SlyX family.

The chain is Protein SlyX homolog from Xylella fastidiosa (strain 9a5c).